The chain runs to 310 residues: tRNA dimethylallyltransferase (310 aa).

5–12 serves as a coordination point for ATP; it reads GPTASGKS. 7 to 12 lines the substrate pocket; that stretch reads TASGKS. The tract at residues 30–33 is interaction with substrate tRNA; it reads DSMQ.

This sequence belongs to the IPP transferase family. Monomer. Mg(2+) is required as a cofactor.

The enzyme catalyses adenosine(37) in tRNA + dimethylallyl diphosphate = N(6)-dimethylallyladenosine(37) in tRNA + diphosphate. Functionally, catalyzes the transfer of a dimethylallyl group onto the adenine at position 37 in tRNAs that read codons beginning with uridine, leading to the formation of N6-(dimethylallyl)adenosine (i(6)A). The polypeptide is tRNA dimethylallyltransferase (Rhodopseudomonas palustris (strain HaA2)).